The chain runs to 304 residues: Mitochondrial RNA-splicing protein MRS4 (304 aa).

Solcar repeat units lie at residues 21–108 (APLH…CKAR), 118–200 (HQPM…ASKF), and 207–300 (YNPL…AKHF). The next 6 helical transmembrane spans lie at 23–41 (LHSQ…HSLM), 83–102 (GVQS…FGTY), 120–139 (PMKT…ALMN), 175–194 (SYPT…FMIY), 209–228 (PLIH…ALTT), and 275–288 (GLKP…PATA).

This sequence belongs to the mitochondrial carrier (TC 2.A.29) family.

It localises to the mitochondrion inner membrane. Its function is as follows. MRS4 suppresses a mitochondrial splice defect in the first intron of the COB gene. It may act as a carrier, exerting its suppressor activity via modulation of solute concentrations in the mitochondrion (possibly of cations). Not essential. The sequence is that of Mitochondrial RNA-splicing protein MRS4 (MRS4) from Saccharomyces cerevisiae (strain ATCC 204508 / S288c) (Baker's yeast).